A 188-amino-acid polypeptide reads, in one-letter code: Adenylate kinase (188 aa).

Position 12-17 (12-17 (GSGKTT)) interacts with ATP. Residues 33-62 (STGDLLRAEVASGSELGKKIDSFISKGNLV) are NMP. Residues Thr-34, Arg-39, 60–62 (NLV), 87–90 (GYPR), and Gln-94 each bind AMP. The segment at 129–135 (GRARGAD) is LID. ATP is bound at residue Arg-130. AMP contacts are provided by Arg-132 and Arg-144. Position 172 (Arg-172) interacts with ATP.

The protein belongs to the adenylate kinase family. As to quaternary structure, monomer.

It localises to the cytoplasm. It carries out the reaction AMP + ATP = 2 ADP. It functions in the pathway purine metabolism; AMP biosynthesis via salvage pathway; AMP from ADP: step 1/1. Catalyzes the reversible transfer of the terminal phosphate group between ATP and AMP. Plays an important role in cellular energy homeostasis and in adenine nucleotide metabolism. The chain is Adenylate kinase from Campylobacter curvus (strain 525.92).